Reading from the N-terminus, the 127-residue chain is Lysozyme C (127 aa).

The C-type lysozyme domain occupies 1–127 (KDIPRCELVK…KDLSSYVRGC (127 aa)). Cystine bridges form between C6–C127, C30–C115, C64–C80, and C76–C94. Residues E35 and D52 contribute to the active site. Ca(2+) is bound by residues K82, D85, N87, D90, and D91.

The protein belongs to the glycosyl hydrolase 22 family. In terms of assembly, monomer. Ca(2+) serves as cofactor.

It is found in the secreted. It catalyses the reaction Hydrolysis of (1-&gt;4)-beta-linkages between N-acetylmuramic acid and N-acetyl-D-glucosamine residues in a peptidoglycan and between N-acetyl-D-glucosamine residues in chitodextrins.. Functionally, lysozymes have primarily a bacteriolytic function; those in tissues and body fluids are associated with the monocyte-macrophage system and enhance the activity of immunoagents. The protein is Lysozyme C (LYZ) of Columba livia (Rock dove).